We begin with the raw amino-acid sequence, 259 residues long: uncharacterized protein (259 aa).

The active site involves Glu-46.

Belongs to the PhzF family.

This is an uncharacterized protein from Pseudomonas aeruginosa (strain ATCC 15692 / DSM 22644 / CIP 104116 / JCM 14847 / LMG 12228 / 1C / PRS 101 / PAO1).